The primary structure comprises 103 residues: Flagellar hook-basal body complex protein FliE (103 aa).

The protein belongs to the FliE family.

It is found in the bacterial flagellum basal body. The polypeptide is Flagellar hook-basal body complex protein FliE (Erwinia tasmaniensis (strain DSM 17950 / CFBP 7177 / CIP 109463 / NCPPB 4357 / Et1/99)).